The primary structure comprises 110 residues: tRNA-binding protein YgjH (110 aa).

In terms of domain architecture, tRNA-binding spans 8–110; the sequence is DFARLEMRVG…RMMPAGVRVV (103 aa).

Homodimer.

In Escherichia coli (strain K12), this protein is tRNA-binding protein YgjH (ygjH).